Consider the following 103-residue polypeptide: Nucleoid-associated protein Adeh_3636 (103 aa).

This sequence belongs to the YbaB/EbfC family. Homodimer.

It is found in the cytoplasm. Its subcellular location is the nucleoid. In terms of biological role, binds to DNA and alters its conformation. May be involved in regulation of gene expression, nucleoid organization and DNA protection. This Anaeromyxobacter dehalogenans (strain 2CP-C) protein is Nucleoid-associated protein Adeh_3636.